The following is a 908-amino-acid chain: Flap endonuclease GEN homolog 1 (908 aa).

Residues 2-96 are XPG-N domain; it reads GVNDLWQILE…SKRNQSRYGS (95 aa). Asp30, Glu75, Glu134, Glu136, Asp155, Asp157, and Asp208 together coordinate Mg(2+). Residues 122-208 form an XPG-I domain region; sequence ECLGIPWVQA…VGLAILLGCD (87 aa). Residues 208-384 are 5'-3' exonuclease domain; it reads DYLPKGVPGV…LLVLLTHYDM (177 aa). Residues 390–464 form a chromodomain region; it reads GSRNSNQLQP…VYQKQKLEIK (75 aa). Phosphoserine is present on residues Ser801 and Ser802.

The protein belongs to the XPG/RAD2 endonuclease family. GEN subfamily. In terms of assembly, largely monomeric, dimerizes on the Holliday junction and the first nick occurs upon dimerization at the junction. Mg(2+) is required as a cofactor.

The protein localises to the nucleus. Its function is as follows. Endonuclease which resolves Holliday junctions (HJs) by the introduction of symmetrically related cuts across the junction point, to produce nicked duplex products in which the nicks can be readily ligated. Four-way DNA intermediates, also known as Holliday junctions, are formed during homologous recombination and DNA repair, and their resolution is necessary for proper chromosome segregation. Cleaves HJs by a nick and counter-nick mechanism involving dual coordinated incisions that lead to the formation of ligatable nicked duplex products. Cleavage of the first strand is rate limiting, while second strand cleavage is rapid. Largely monomeric, dimerizes on the HJ and the first nick occurs upon dimerization at the junction. Efficiently cleaves both single and double HJs contained within large recombination intermediates. Exhibits a weak sequence preference for incision between two G residues that reside in a T-rich region of DNA. Also has endonuclease activity on 5'-flap and replication fork (RF) DNA substrates. The polypeptide is Flap endonuclease GEN homolog 1 (GEN1) (Homo sapiens (Human)).